A 504-amino-acid polypeptide reads, in one-letter code: ATP synthase subunit beta (504 aa).

The disordered stretch occupies residues 1–23 (MAKAATPKETAAAKKPAAPKKAA). Position 182 to 189 (182 to 189 (GGAGVGKT)) interacts with ATP.

Belongs to the ATPase alpha/beta chains family. As to quaternary structure, F-type ATPases have 2 components, CF(1) - the catalytic core - and CF(0) - the membrane proton channel. CF(1) has five subunits: alpha(3), beta(3), gamma(1), delta(1), epsilon(1). CF(0) has three main subunits: a(1), b(2) and c(9-12). The alpha and beta chains form an alternating ring which encloses part of the gamma chain. CF(1) is attached to CF(0) by a central stalk formed by the gamma and epsilon chains, while a peripheral stalk is formed by the delta and b chains.

The protein localises to the cell inner membrane. The enzyme catalyses ATP + H2O + 4 H(+)(in) = ADP + phosphate + 5 H(+)(out). In terms of biological role, produces ATP from ADP in the presence of a proton gradient across the membrane. The catalytic sites are hosted primarily by the beta subunits. This chain is ATP synthase subunit beta, found in Rhizobium meliloti (strain 1021) (Ensifer meliloti).